The following is a 219-amino-acid chain: Oligoribonuclease (219 aa).

In terms of domain architecture, Exonuclease spans 19 to 184 (LVWVDLEMTG…ADIVESIREL (166 aa)). Residue Tyr141 is part of the active site.

It belongs to the oligoribonuclease family.

It is found in the cytoplasm. 3'-to-5' exoribonuclease specific for small oligoribonucleotides. The protein is Oligoribonuclease of Corynebacterium glutamicum (strain R).